The chain runs to 125 residues: Large ribosomal subunit protein bL12 (125 aa).

The protein belongs to the bacterial ribosomal protein bL12 family. In terms of assembly, homodimer. Part of the ribosomal stalk of the 50S ribosomal subunit. Forms a multimeric L10(L12)X complex, where L10 forms an elongated spine to which 2 to 4 L12 dimers bind in a sequential fashion. Binds GTP-bound translation factors.

Forms part of the ribosomal stalk which helps the ribosome interact with GTP-bound translation factors. Is thus essential for accurate translation. The sequence is that of Large ribosomal subunit protein bL12 from Methylorubrum extorquens (strain CM4 / NCIMB 13688) (Methylobacterium extorquens).